Reading from the N-terminus, the 539-residue chain is Tyrosine-protein kinase csk-1 (539 aa).

The region spanning 43-110 (SPGNDVIVTR…HADCVVRING (68 aa)) is the SH3 domain. Residues 129–148 (PGAASTTSSTSSHHSTAANH) form a disordered region. Positions 131 to 146 (AASTTSSTSSHHSTAA) are enriched in low complexity. Residues 151–241 (WFHSMISREN…GLCHRLVTPI (91 aa)) enclose the SH2 domain. A Protein kinase domain is found at 283–535 (IDVGDTIGHG…GQVLQRLTTI (253 aa)). ATP is bound by residues 289 to 297 (IGHGEFGDV) and Lys310. Asp403 serves as the catalytic Proton acceptor.

It belongs to the protein kinase superfamily. Tyr protein kinase family. CSK subfamily. Mg(2+) is required as a cofactor. Requires Mn(2+) as cofactor. In terms of tissue distribution, expressed predominantly in pharyngeal muscles in procorpus, metacorpus and terminal bulb. Expressed also in some neurons (ASE, ADF, AVA, AUA, RMDV and BAG) in the head region, anchor cell, vulva, cells around anus, body wall muscle and gondal distal tip cells.

It carries out the reaction L-tyrosyl-[protein] + ATP = O-phospho-L-tyrosyl-[protein] + ADP + H(+). Its function is as follows. Non-receptor tyrosine-protein kinase which plays a role in pharynx function by regulating pumping and the orientation of pharyngeal muscle fibers, independently of src-1 and src-2. May phosphorylate and thereby negatively regulate src-1 and src-2 activities. In Caenorhabditis elegans, this protein is Tyrosine-protein kinase csk-1.